A 265-amino-acid chain; its full sequence is MNTTFPAVYGPVNSWRYGRSLGIDPIGAISTCSFNCVYCQLGEIEHLSGDRQIFIPTADILRELAQFAPWEVDVITLSGSGEPTLAKNLGEILEGIKKLTGKLTLVLTNATLLNDAQVREELSLADKISVKLDGLWPDQLQRINRPIAGIELEQILTGIQTFQQEFTGELSVQTMVLQPWDQTTENRYLELLSLIKPTEVQLNRPTRPKPLQRELEGRGNHTGTPYGDRPVTQIKCVDGQTLQNLAKKISGAIGIPVRCAPVKVL.

The Radical SAM core domain occupies 16 to 252; that stretch reads RYGRSLGIDP…QNLAKKISGA (237 aa). Residues Cys-32, Cys-36, and Cys-39 each contribute to the [4Fe-4S] cluster site. The segment at 204-230 is disordered; the sequence is RPTRPKPLQRELEGRGNHTGTPYGDRP.

This sequence belongs to the UPF0026 family. Requires [4Fe-4S] cluster as cofactor.

This Synechocystis sp. (strain ATCC 27184 / PCC 6803 / Kazusa) protein is UPF0026 protein slr1464.